We begin with the raw amino-acid sequence, 78 residues long: MSRVCQVTGKRPVTGNNRSHALNATKRRFLPNLHSHRFWVEGEKRFVTLRVSAKGMRVIDKKGIEAVLADLRARGEKY.

The protein belongs to the bacterial ribosomal protein bL28 family.

The chain is Large ribosomal subunit protein bL28 from Edwardsiella ictaluri (strain 93-146).